Reading from the N-terminus, the 212-residue chain is ATP-dependent dethiobiotin synthetase BioD (212 aa).

Residue 12-17 participates in ATP binding; sequence DCGKTF. T16 serves as a coordination point for Mg(2+). K33 is an active-site residue. S37 lines the substrate pocket. Residues D50, 110–113, and 170–171 contribute to the ATP site; these read EGAG and NC. Mg(2+) is bound by residues D50 and E110.

It belongs to the dethiobiotin synthetase family. In terms of assembly, homodimer. Mg(2+) serves as cofactor.

It localises to the cytoplasm. It catalyses the reaction (7R,8S)-7,8-diammoniononanoate + CO2 + ATP = (4R,5S)-dethiobiotin + ADP + phosphate + 3 H(+). It functions in the pathway cofactor biosynthesis; biotin biosynthesis; biotin from 7,8-diaminononanoate: step 1/2. Functionally, catalyzes a mechanistically unusual reaction, the ATP-dependent insertion of CO2 between the N7 and N8 nitrogen atoms of 7,8-diaminopelargonic acid (DAPA, also called 7,8-diammoniononanoate) to form a ureido ring. The polypeptide is ATP-dependent dethiobiotin synthetase BioD (Legionella pneumophila (strain Paris)).